The following is a 332-amino-acid chain: Fructose-1,6-bisphosphatase class 1 (332 aa).

Positions 91, 112, 114, and 115 each coordinate Mg(2+). Residues 115-118 (DGSS), Asn208, Tyr241, and Lys271 each bind substrate. Residue Glu277 coordinates Mg(2+).

Belongs to the FBPase class 1 family. In terms of assembly, homotetramer. Mg(2+) is required as a cofactor.

It is found in the cytoplasm. The enzyme catalyses beta-D-fructose 1,6-bisphosphate + H2O = beta-D-fructose 6-phosphate + phosphate. It participates in carbohydrate biosynthesis; Calvin cycle. The protein is Fructose-1,6-bisphosphatase class 1 of Chlorobium phaeobacteroides (strain DSM 266 / SMG 266 / 2430).